Reading from the N-terminus, the 403-residue chain is Phosphoglycerate kinase (403 aa).

Residues 22-24 (DLN), Arg-37, 60-63 (HLGN), Arg-119, and Arg-152 each bind substrate. ATP-binding positions include Lys-202, Glu-325, and 355 to 358 (GGDT).

The protein belongs to the phosphoglycerate kinase family. As to quaternary structure, monomer.

The protein resides in the cytoplasm. The catalysed reaction is (2R)-3-phosphoglycerate + ATP = (2R)-3-phospho-glyceroyl phosphate + ADP. It participates in carbohydrate degradation; glycolysis; pyruvate from D-glyceraldehyde 3-phosphate: step 2/5. This chain is Phosphoglycerate kinase, found in Orientia tsutsugamushi (strain Boryong) (Rickettsia tsutsugamushi).